A 366-amino-acid polypeptide reads, in one-letter code: Galactoside alpha-(1,2)-fucosyltransferase 1 (366 aa).

At 1 to 8 (MWPLSHRH) the chain is on the cytoplasmic side. Residues 9 to 25 (LCLAFLLVCVLSAISFF) form a helical; Signal-anchor for type II membrane protein membrane-spanning segment. At 26-366 (LHIHQDSFRH…LSPLWTLAEP (341 aa)) the chain is on the lumenal side. N-linked (GlcNAc...) asparagine glycans are attached at residues Asn-66, Asn-302, and Asn-328.

Belongs to the glycosyltransferase 11 family.

It localises to the golgi apparatus. Its subcellular location is the golgi stack membrane. The enzyme catalyses a beta-D-galactosyl-(1-&gt;4)-N-acetyl-beta-D-glucosaminyl derivative + GDP-beta-L-fucose = an alpha-L-Fuc-(1-&gt;2)-beta-D-Gal-(1-&gt;4)-beta-D-GlcNAc derivative + GDP + H(+). The catalysed reaction is a ganglioside GA1 + GDP-beta-L-fucose = a ganglioside Fuc-GA1 + GDP + H(+). It catalyses the reaction a beta-D-Gal-(1-&gt;3)-beta-D-GlcNAc-(1-&gt;3)-beta-D-Gal-(1-&gt;4)-beta-D-Glc-(1&lt;-&gt;1')-Cer(d18:1(4E)) + GDP-beta-L-fucose = alpha-L-fucosyl-(1-&gt;2)- beta-D-galactosyl-(1-&gt;3)-N-acetyl-beta-D-glucosaminyl-(1-&gt;3)-beta-D-galactosyl-(1-&gt;4)-beta-D-glucosyl-(1&lt;-&gt;1')-N-acylsphing-4-enine + GDP + H(+). It carries out the reaction a neolactoside nLc4Cer(d18:1(4E)) + GDP-beta-L-fucose = a neolactoside IV(2)-alpha-Fuc-nLc4Cer(d18:1(4E)) + GDP + H(+). The enzyme catalyses a ganglioside GM1 + GDP-beta-L-fucose = a ganglioside Fuc-GM1 + GDP + H(+). The catalysed reaction is beta-D-galactosyl-(1-&gt;3)-N-acetyl-D-galactosamine + GDP-beta-L-fucose = alpha-L-fucosyl-(1-&gt;2)-beta-D-galactosyl-(1-&gt;3)-N-acetyl-D-galactosamine + GDP + H(+). It participates in protein modification; protein glycosylation. Catalyzes the transfer of L-fucose, from a guanosine diphosphate-beta-L-fucose, to the terminal galactose residue of glycoconjugates through an alpha(1,2) linkage leading to H antigen synthesis that is an intermediate substrate in the synthesis of ABO blood group antigens. H antigen is essential for maturation of the glomerular layer of the main olfactory bulb, in cell migration and early cell-cell contacts during tumor associated angiogenesis. Preferentially fucosylates soluble lactose and to a lesser extent fucosylates glycolipids gangliosides GA1 and GM1a. The polypeptide is Galactoside alpha-(1,2)-fucosyltransferase 1 (Ateles belzebuth (White-bellied spider monkey)).